The primary structure comprises 1367 residues: Mediator of RNA polymerase II transcription subunit 23 (1367 aa).

Residues 1343–1367 form a disordered region; it reads PPQALNSGSPAPQSNQVPASLPVTQ. A compositionally biased stretch (polar residues) spans 1346 to 1367; that stretch reads ALNSGSPAPQSNQVPASLPVTQ.

This sequence belongs to the Mediator complex subunit 23 family. In terms of assembly, component of the Mediator complex, which is composed of MED1, MED4, MED6, MED7, MED8, MED9, MED10, MED11, MED12, MED13, MED13L, MED14, MED15, MED16, MED17, MED18, MED19, MED20, MED21, MED22, MED23, MED24, MED25, MED26, MED27, MED29, MED30, MED31, CCNC, CDK8 and CDC2L6/CDK11. The MED12, MED13, CCNC and CDK8 subunits form a distinct module termed the CDK8 module. Mediator containing the CDK8 module is less active than Mediator lacking this module in supporting transcriptional activation. Individual preparations of the Mediator complex lacking one or more distinct subunits have been variously termed ARC, CRSP, DRIP, PC2, SMCC and TRAP. Interacts with CEBPB (when not methylated), CTNNB1, and GLI3. Interacts with CDK8 and ELK1.

The protein resides in the nucleus. In terms of biological role, component of the Mediator complex, a coactivator involved in the regulated transcription of nearly all RNA polymerase II-dependent genes. Mediator functions as a bridge to convey information from gene-specific regulatory proteins to the basal RNA polymerase II transcription machinery. Mediator is recruited to promoters by direct interactions with regulatory proteins and serves as a scaffold for the assembly of a functional pre-initiation complex with RNA polymerase II and the general transcription factors. Also required for transcriptional activation subsequent to the assembly of the pre-initiation complex. Required for transcriptional activation by adenovirus E1A protein. Required for ELK1-dependent transcriptional activation in response to activated Ras signaling. The sequence is that of Mediator of RNA polymerase II transcription subunit 23 (Med23) from Mus musculus (Mouse).